The primary structure comprises 186 residues: Transposon Tn21 resolvase (186 aa).

Residues 4 to 137 form the Resolvase/invertase-type recombinase catalytic domain; it reads QRIGYIRVST…EGIALAKQRG (134 aa). Residue serine 12 is the O-(5'-phospho-DNA)-serine intermediate of the active site. The H-T-H motif DNA-binding region spans 164-183; that stretch reads KTKLAREFGISRETLYQYLR.

It belongs to the site-specific recombinase resolvase family.

Its function is as follows. Resolvase catalyzes the resolution (a site-specific recombination) of the cointegrated replicon to yield the final transposition products. The chain is Transposon Tn21 resolvase (tnpR) from Escherichia coli.